A 629-amino-acid polypeptide reads, in one-letter code: 1-deoxy-D-xylulose-5-phosphate synthase (629 aa).

Residues H79 and 119 to 121 contribute to the thiamine diphosphate site; that span reads SHA. Position 150 (D150) interacts with Mg(2+). Residues 151–152, N180, Y292, and E377 contribute to the thiamine diphosphate site; that span reads GS. N180 lines the Mg(2+) pocket.

It belongs to the transketolase family. DXPS subfamily. Homodimer. Requires Mg(2+) as cofactor. Thiamine diphosphate serves as cofactor.

The enzyme catalyses D-glyceraldehyde 3-phosphate + pyruvate + H(+) = 1-deoxy-D-xylulose 5-phosphate + CO2. It participates in metabolic intermediate biosynthesis; 1-deoxy-D-xylulose 5-phosphate biosynthesis; 1-deoxy-D-xylulose 5-phosphate from D-glyceraldehyde 3-phosphate and pyruvate: step 1/1. Its function is as follows. Catalyzes the acyloin condensation reaction between C atoms 2 and 3 of pyruvate and glyceraldehyde 3-phosphate to yield 1-deoxy-D-xylulose-5-phosphate (DXP). The protein is 1-deoxy-D-xylulose-5-phosphate synthase of Tropheryma whipplei (strain TW08/27) (Whipple's bacillus).